A 1074-amino-acid chain; its full sequence is Semaphorin-5A (1074 aa).

The N-terminal stretch at 1–22 (MKGACILAWLFSSLGVWRLARP) is a signal peptide. Residues 35–484 (HPVVSYKEIG…LQEHVVKIPL (450 aa)) form the Sema domain. Intrachain disulfides connect C104-C114 and C131-C140. N-linked (GlcNAc...) asparagine glycans are attached at residues N147, N168, N227, and N277. 2 cysteine pairs are disulfide-bonded: C254/C357 and C278/C320. N-linked (GlcNAc...) asparagine glycans are attached at residues N323 and N367. The PSI domain occupies 486 to 533 (RCHFHQTRGACIGAQDPYCGWDAVMKKCTSLEESLSMTQWDQSVPTCP). N-linked (GlcNAc...) asparagine glycans are attached at residues N536 and N591. 3 TSP type-1 domains span residues 540-593 (DGSF…TNCS), 595-651 (NGGW…LLCP), and 653-702 (HVFW…NACP). 6 disulfides stabilise this stretch: C607–C644, C611–C650, C622–C634, C665–C696, C669–C701, and C680–C686. Residue N717 is glycosylated (N-linked (GlcNAc...) asparagine). TSP type-1 domains follow at residues 784–839 (NGAW…LPCP), 841–896 (DGVW…QTCP), and 897–944 (ENWS…VFDS). Intrachain disulfides connect C796–C833, C800–C838, C811–C823, C853–C890, C857–C895, and C868–C880. N-linked (GlcNAc...) asparagine glycosylation is found at N898 and N933. The helical transmembrane segment at 969-989 (FHMMAVGLSSSILGCLLTLLV) threads the bilayer. N-linked (GlcNAc...) asparagine glycosylation occurs at N1015.

Binds PLXNB3.

The protein resides in the membrane. Its function is as follows. Bifunctional axonal guidance cue regulated by sulfated proteoglycans; attractive effects result from interactions with heparan sulfate proteoglycans (HSPGs), while the inhibitory effects depend on interactions with chondroitin sulfate proteoglycans (CSPGs). Ligand for receptor PLXNB3. In glioma cells, SEMA5A stimulation of PLXNB3 results in the disassembly of F-actin stress fibers, disruption of focal adhesions and cellular collapse as well as inhibition of cell migration and invasion through ARHGDIA-mediated inactivation of RAC1. May promote angiogenesis by increasing endothelial cell proliferation and migration and inhibiting apoptosis. The sequence is that of Semaphorin-5A (Sema5a) from Rattus norvegicus (Rat).